Here is an 89-residue protein sequence, read N- to C-terminus: Microcin N (89 aa).

Residues 1-15 form the signal peptide; the sequence is MRELDREELNCVGGA.

This sequence belongs to the class IIa microcin family. Post-translationally, mass spectrometry suggests 3 of the 4 Met residues of the mature peptide are oxidized.

It localises to the secreted. Its function is as follows. Active against E.coli and Salmonella, but not Listeria or Campylobacter. Channel-forming microcin. Probably neutralized by its immunity protein McnI. This is Microcin N from Escherichia coli.